The chain runs to 356 residues: Fructose-1,6-bisphosphatase class 1 (356 aa).

Positions 1-26 are disordered; the sequence is MAREWPMTHPSNHPMDHHHQTLQAHL. Positions 101, 120, 122, and 123 each coordinate Mg(2+). Residues 123–126 and N211 each bind substrate; that span reads DGSS. Residue E283 coordinates Mg(2+).

The protein belongs to the FBPase class 1 family. In terms of assembly, homotetramer. Requires Mg(2+) as cofactor.

Its subcellular location is the cytoplasm. The enzyme catalyses beta-D-fructose 1,6-bisphosphate + H2O = beta-D-fructose 6-phosphate + phosphate. It participates in carbohydrate biosynthesis; Calvin cycle. This Bradyrhizobium sp. (strain ORS 278) protein is Fructose-1,6-bisphosphatase class 1.